The following is a 96-amino-acid chain: Cytochrome c-553 (96 aa).

A signal peptide spans 1–19; that stretch reads MKKVIVALGVLAFANVLMA. The heme c site is built by cysteine 29, cysteine 32, histidine 33, and methionine 73.

This sequence belongs to the cytochrome c family. Post-translationally, binds 1 heme c group covalently per subunit.

Its subcellular location is the periplasm. In terms of biological role, natural electron acceptor for a formate dehydrogenase. The polypeptide is Cytochrome c-553 (Helicobacter pylori (strain J99 / ATCC 700824) (Campylobacter pylori J99)).